The sequence spans 604 residues: Prostaglandin G/H synthase 2 (604 aa).

The first 17 residues, 1 to 17, serve as a signal peptide directing secretion; sequence MLARALLLCVALALGHA. Residues 18–55 enclose the EGF-like domain; it reads ANPCCSNPCQNRGVCMSVGFDQYQCDCTRTGFYGENCS. Disulfide bonds link cysteine 21/cysteine 32, cysteine 22/cysteine 145, cysteine 26/cysteine 42, and cysteine 44/cysteine 54. N-linked (GlcNAc...) asparagine glycosylation occurs at asparagine 53. Arginine 106 lines the substrate pocket. Residue asparagine 130 is glycosylated (N-linked (GlcNAc...) asparagine). Histidine 193 acts as the Proton acceptor in catalysis. Tyrosine 341 lines the substrate pocket. The active-site For cyclooxygenase activity is the tyrosine 371. Histidine 374 contributes to the heme b binding site. Asparagine 396 carries N-linked (GlcNAc...) asparagine glycosylation. Cysteine 526 carries the S-nitrosocysteine modification. Residues cysteine 555 and cysteine 561 are joined by a disulfide bond. An N-linked (GlcNAc...) asparagine glycan is attached at asparagine 580.

The protein belongs to the prostaglandin G/H synthase family. Homodimer. Requires heme b as cofactor. S-nitrosylation by NOS2 (iNOS) activates enzyme activity. S-nitrosylation may take place on different Cys residues in addition to Cys-526.

It localises to the microsome membrane. It is found in the endoplasmic reticulum membrane. Its subcellular location is the nucleus inner membrane. The protein resides in the nucleus outer membrane. The catalysed reaction is (5Z,8Z,11Z,14Z)-eicosatetraenoate + AH2 + 2 O2 = prostaglandin H2 + A + H2O. It carries out the reaction (5Z,8Z,11Z,14Z)-eicosatetraenoate + 2 O2 = prostaglandin G2. The enzyme catalyses prostaglandin G2 + AH2 = prostaglandin H2 + A + H2O. It catalyses the reaction (5Z,8Z,11Z,14Z,17Z)-eicosapentaenoate + 2 O2 = prostaglandin G3. The catalysed reaction is prostaglandin G3 + AH2 = prostaglandin H3 + A + H2O. It carries out the reaction (8Z,11Z,14Z)-eicosatrienoate + 2 O2 = prostaglandin G1. The enzyme catalyses prostaglandin G1 + AH2 = prostaglandin H1 + A + H2O. It catalyses the reaction 2-(5Z,8Z,11Z,14Z)-eicosatetraenoyl-sn-glycero-3-phosphoethanolamine + 2 O2 = 2-(prostaglandin G2)-sn-glycero-3-phosphoethanolamine. The catalysed reaction is 2-(prostaglandin G2)-sn-glycero-3-phosphoethanolamine + AH2 = 2-(prostaglandin H2)-sn-glycero-3-phosphoethanolamine + A + H2O. It carries out the reaction 2-(5Z,8Z,11Z,14Z)-eicosatetraenoyl-sn-glycero-3-phosphocholine + 2 O2 = 2-(prostaglandin G2)-sn-glycero-3-phosphocholine. The enzyme catalyses 2-(prostaglandin G2)-sn-glycero-3-phosphocholine + AH2 = 2-(prostaglandin H2)-sn-glycero-3-phosphocholine + A + H2O. It catalyses the reaction (15S)-hydroperoxy-(5Z,8Z,11Z,13E)-eicosatetraenoate + AH2 = (15S)-hydroxy-(5Z,8Z,11Z,13E)-eicosatetraenoate + A + H2O. The catalysed reaction is 2-(5Z,8Z,11Z,14Z)-eicosatetraenoyl-sn-glycero-3-phosphocholine + AH2 + O2 = 2-[(15S)-hydroxy-(5Z,8Z,11Z,13E)-eicosatetraenoyl]-sn-glycero-3-phosphocholine + A + H2O. It carries out the reaction 2-(5Z,8Z,11Z,14Z)-eicosatetraenoyl-sn-glycero-3-phosphocholine + AH2 + O2 = 2-[(15R)-hydroxy-(5Z,8Z,11Z,13E)-eicosatetraenoyl]-sn-glycero-3-phosphocholine + A + H2O. The enzyme catalyses 2-(5Z,8Z,11Z,14Z)-eicosatetraenoyl-sn-glycero-3-phosphocholine + AH2 + O2 = 2-[(11R)-hydroxy-(5Z,8Z,12E,14Z)-eicosatetraenoyl]-sn-glycero-3-phosphocholine + A + H2O. It catalyses the reaction (9Z,12Z)-octadecadienoate + AH2 + O2 = 9-hydroxy-(10E,12Z)-octadecadienoate + A + H2O. The catalysed reaction is (9Z,12Z)-octadecadienoate + AH2 + O2 = 13-hydroxy-(9Z,11E)-octadecadienoate + A + H2O. It carries out the reaction (5Z,8Z,11Z,14Z)-eicosatetraenoate + AH2 + O2 = (15R)-hydroxy-(5Z,8Z,11Z,13E)-eicosatetraenoate + A + H2O. The enzyme catalyses (5Z,8Z,11Z,14Z)-eicosatetraenoate + AH2 + O2 = (11R)-hydroxy-(5Z,8Z,12E,14Z)-eicosatetraenoate + A + H2O. It catalyses the reaction (5Z,8Z,11Z,14Z,17Z)-eicosapentaenoate + AH2 + O2 = (11R)-hydroxy-(5Z,8Z,12E,14Z,17Z)-eicosapentaenoate + A + H2O. The catalysed reaction is (5Z,8Z,11Z,14Z,17Z)-eicosapentaenoate + AH2 + O2 = (18S)-hydroxy-(5Z,8Z,11Z,14Z,16E)-eicosapentaenoate + A + H2O. It carries out the reaction (5Z,8Z,11Z,14Z,17Z)-eicosapentaenoate + AH2 + O2 = (18R)-hydroxy-(5Z,8Z,11Z,14Z,16E)-eicosapentaenoate + A + H2O. The enzyme catalyses (5Z,8Z,11Z,14Z,17Z)-eicosapentaenoate + AH2 + O2 = (15R)-hydroxy-(5Z,8Z,11Z,13E,17Z)-eicosapentaenoate + A + H2O. It catalyses the reaction (5Z,8Z,11Z,14Z,17Z)-eicosapentaenoate + AH2 + O2 = (15S)-hydroxy-(5Z,8Z,11Z,13E,17Z)-eicosapentaenoate + A + H2O. The catalysed reaction is (7Z,10Z,13Z,16Z,19Z)-docosapentaenoate + AH2 + O2 = 13R-hydroxy-(7Z,10Z,14E,16Z,19Z)-docosapentaenoate + A + H2O. It carries out the reaction (4Z,7Z,10Z,13Z,16Z,19Z)-docosahexaenoate + AH2 + O2 = 13-hydroxy-(4Z,7Z,10Z,14E,16Z,19Z)-docosahexaenoate + A + H2O. The enzyme catalyses (5S)-hydroxy-(6E,8Z,11Z,14Z)-eicosatetraenoate + AH2 + O2 = (5S,15R)-dihydroxy-(6E,8Z,11Z,13E)-eicosatetraenoate + A + H2O. It catalyses the reaction (4Z,7Z,10Z,13Z,16Z,19Z)-docosahexaenoate + AH2 + O2 = 17R-hydroxy-(4Z,7Z,10Z,13Z,15E,19Z)-docosahexaenoate + A + H2O. The catalysed reaction is (5S)-hydroxy-(6E,8Z,11Z,14Z)-eicosatetraenoate + AH2 + O2 = (5S,15S)-dihydroxy-(6E,8Z,11Z,13E)-eicosatetraenoate + A + H2O. It carries out the reaction (5S)-hydroxy-(6E,8Z,11Z,14Z)-eicosatetraenoate + AH2 + O2 = (5S,11R)-dihydroxy-(6E,8Z,12E,14Z)-eicosatetraenoate + A + H2O. The enzyme catalyses 2-(5Z,8Z,11Z,14Z-eicosatetraenoyl)-glycerol + 2 O2 = 2-glyceryl-prostaglandin G2. It catalyses the reaction 2-glyceryl-prostaglandin G2 + AH2 = 2-glyceryl-prostaglandin H2 + A + H2O. The catalysed reaction is (5Z,8Z,11Z,14Z)-eicosatetraenoate + O2 = (15R)-hydroperoxy-(5Z,8Z,11Z,13E)-eicosatetraenoate. It carries out the reaction (5Z,8Z,11Z,14Z)-eicosatetraenoate + O2 = 11R-hydroperoxy-(5Z,8Z,12E,14Z)-eicosatetraenoate. The enzyme catalyses (9Z,12Z)-octadecadienoate + AH2 + O2 = (9R)-hydroxy-(10E,12Z)-octadecadienoate + A + H2O. It catalyses the reaction (9Z,12Z)-octadecadienoate + AH2 + O2 = (9S)-hydroxy-(10E,12Z)-octadecadienoate + A + H2O. The catalysed reaction is (9Z,12Z)-octadecadienoate + AH2 + O2 = (13S)-hydroxy-(9Z,11E)-octadecadienoate + A + H2O. It carries out the reaction (9Z,12Z)-octadecadienoate + AH2 + O2 = (13R)-hydroxy-(9Z,11E)-octadecadienoate + A + H2O. Its pathway is lipid metabolism; prostaglandin biosynthesis. Its function is as follows. Dual cyclooxygenase and peroxidase in the biosynthesis pathway of prostanoids, a class of C20 oxylipins mainly derived from arachidonate ((5Z,8Z,11Z,14Z)-eicosatetraenoate, AA, C20:4(n-6)), with a particular role in the inflammatory response. The cyclooxygenase activity oxygenates AA to the hydroperoxy endoperoxide prostaglandin G2 (PGG2), and the peroxidase activity reduces PGG2 to the hydroxy endoperoxide prostaglandin H2 (PGH2), the precursor of all 2-series prostaglandins and thromboxanes. This complex transformation is initiated by abstraction of hydrogen at carbon 13 (with S-stereochemistry), followed by insertion of molecular O2 to form the endoperoxide bridge between carbon 9 and 11 that defines prostaglandins. The insertion of a second molecule of O2 (bis-oxygenase activity) yields a hydroperoxy group in PGG2 that is then reduced to PGH2 by two electrons. Similarly catalyzes successive cyclooxygenation and peroxidation of dihomo-gamma-linoleate (DGLA, C20:3(n-6)) and eicosapentaenoate (EPA, C20:5(n-3)) to corresponding PGH1 and PGH3, the precursors of 1- and 3-series prostaglandins. In an alternative pathway of prostanoid biosynthesis, converts 2-arachidonoyl lysophopholipids to prostanoid lysophopholipids, which are then hydrolyzed by intracellular phospholipases to release free prostanoids. Metabolizes 2-arachidonoyl glycerol yielding the glyceryl ester of PGH2, a process that can contribute to pain response. Generates lipid mediators from n-3 and n-6 polyunsaturated fatty acids (PUFAs) via a lipoxygenase-type mechanism. Oxygenates PUFAs to hydroperoxy compounds and then reduces them to corresponding alcohols. Plays a role in the generation of resolution phase interaction products (resolvins) during both sterile and infectious inflammation. Metabolizes docosahexaenoate (DHA, C22:6(n-3)) to 17R-HDHA, a precursor of the D-series resolvins (RvDs). As a component of the biosynthetic pathway of E-series resolvins (RvEs), converts eicosapentaenoate (EPA, C20:5(n-3)) primarily to 18S-HEPE that is further metabolized by ALOX5 and LTA4H to generate 18S-RvE1 and 18S-RvE2. In vascular endothelial cells, converts docosapentaenoate (DPA, C22:5(n-3)) to 13R-HDPA, a precursor for 13-series resolvins (RvTs) shown to activate macrophage phagocytosis during bacterial infection. In activated leukocytes, contributes to oxygenation of hydroxyeicosatetraenoates (HETE) to diHETES (5,15-diHETE and 5,11-diHETE). Can also use linoleate (LA, (9Z,12Z)-octadecadienoate, C18:2(n-6)) as substrate and produce hydroxyoctadecadienoates (HODEs) in a regio- and stereospecific manner, being (9R)-HODE ((9R)-hydroxy-(10E,12Z)-octadecadienoate) and (13S)-HODE ((13S)-hydroxy-(9Z,11E)-octadecadienoate) its major products. During neuroinflammation, plays a role in neuronal secretion of specialized preresolving mediators (SPMs) 15R-lipoxin A4 that regulates phagocytic microglia. In Equus caballus (Horse), this protein is Prostaglandin G/H synthase 2 (PTGS2).